Here is a 133-residue protein sequence, read N- to C-terminus: Small ribosomal subunit protein uS11 (133 aa).

This sequence belongs to the universal ribosomal protein uS11 family. In terms of assembly, part of the 30S ribosomal subunit. Interacts with proteins S7 and S18. Binds to IF-3.

Its function is as follows. Located on the platform of the 30S subunit, it bridges several disparate RNA helices of the 16S rRNA. Forms part of the Shine-Dalgarno cleft in the 70S ribosome. This chain is Small ribosomal subunit protein uS11, found in Bordetella petrii (strain ATCC BAA-461 / DSM 12804 / CCUG 43448).